Reading from the N-terminus, the 622-residue chain is MSTEHKQYLSAVTLAAIGVVYGDIGTSPLYTLRECFSGHYGFDVRPDVVFGFLSLIFWMLILVVSVKYLTYVMRADNAGEGGILTLMSLAGRNTSSRATSILVVLGLIGGSFFYGEVVITPAISVMSAIEGLEIAAPALDPYIVPCSIAVLTLLFVIQKHGTGSVGKLFAPVMLVWFLTLALLGLRSIIANPEVLAALNPKWAISFFVEYKSVSFFALGAVVLAITGVEALYADMGHFGKFPIRLAWFTVVLPSLVLNYFGQGALLLKNPEAIKNPFFLLAPDWALIPLLILATLATVIASQAVISGVFSLTRQAVRLGYLPPMRIIHTSEMESGQIYIPVINWTLYLAVVLVIIGFERSSNLAAAYGIAVTGTMVITSILFCTVAWKNWHWNRFLVVFLLMVLLIIDIPMFSANVLKLFSGGWLPLSLGLVMFIIMTTWKSERFSLLRRMHEHSNSLEAMIASLEKSPPVRVPGTAVYMSRAMNVIPFALLHNLKHNKVLHERVVLLTMRTDDVPYVHNVERVTIEQLSPTFWRVVARYGWRETPNVAEIFHRCGLEGLSCQMMETSFFMSHESLILTKRPWHLFLRGKLFIALSRNALRAPDQFEIPPNRVIELGTQVEI.

Helical transmembrane passes span 9-29 (LSAVTLAAIGVVYGDIGTSPL), 46-66 (PDVVFGFLSLIFWMLILVVSV), 101-121 (ILVVLGLIGGSFFYGEVVITP), 137-157 (PALDPYIVPCSIAVLTLLFVI), 165-185 (VGKLFAPVMLVWFLTLALLGL), 213-233 (VSFFALGAVVLAITGVEALYA), 247-267 (WFTVVLPSLVLNYFGQGALLL), 276-296 (PFFLLAPDWALIPLLILATLA), 337-357 (IYIPVINWTLYLAVVLVIIGF), 363-383 (LAAAYGIAVTGTMVITSILFC), 395-415 (FLVVFLLMVLLIIDIPMFSAN), and 416-436 (VLKLFSGGWLPLSLGLVMFII).

The protein belongs to the HAK/KUP transporter (TC 2.A.72) family.

The protein localises to the cell inner membrane. The catalysed reaction is K(+)(in) + H(+)(in) = K(+)(out) + H(+)(out). Functionally, responsible for the low-affinity transport of potassium into the cell. Likely operates as a K(+):H(+) symporter. In Yersinia pestis bv. Antiqua (strain Antiqua), this protein is Low affinity potassium transport system protein Kup.